The primary structure comprises 189 residues: UPF0301 protein RP032 (189 aa).

It belongs to the UPF0301 (AlgH) family.

This is UPF0301 protein RP032 from Rickettsia prowazekii (strain Madrid E).